The following is a 303-amino-acid chain: MTQQRTLKNTIRATGVGLHSGDKVYMTLRPAPVDHGIVFRRVDLEPVVEVPADAELVTETTLCTGLTCNGAKIQTVEHLMSALAGLGVDNVIVELSSAELPIMDGSSGPFVFLLQSAGIVEQNKAKRFIRIKQPVEVREGDKVARFEPYEGYKLGFTIEFNHPMIPAKQSRQEIEFSTSAYVKEISRARTFGFMRDLEYMRERNLGLGGSMDNAIVLDEFRVLNEDGLRYTNEFVRHKILDAIGDLYLAGGAILGAYEGFKSGHALNNKLVRALLADQAAWEWVSFPEGTEQPPVTYASPVYA.

Residues histidine 78, histidine 237, and aspartate 241 each coordinate Zn(2+). The active-site Proton donor is histidine 264.

This sequence belongs to the LpxC family. Zn(2+) is required as a cofactor.

The catalysed reaction is a UDP-3-O-[(3R)-3-hydroxyacyl]-N-acetyl-alpha-D-glucosamine + H2O = a UDP-3-O-[(3R)-3-hydroxyacyl]-alpha-D-glucosamine + acetate. Its pathway is glycolipid biosynthesis; lipid IV(A) biosynthesis; lipid IV(A) from (3R)-3-hydroxytetradecanoyl-[acyl-carrier-protein] and UDP-N-acetyl-alpha-D-glucosamine: step 2/6. Functionally, catalyzes the hydrolysis of UDP-3-O-myristoyl-N-acetylglucosamine to form UDP-3-O-myristoylglucosamine and acetate, the committed step in lipid A biosynthesis. The polypeptide is UDP-3-O-acyl-N-acetylglucosamine deacetylase (Xanthomonas campestris pv. campestris (strain 8004)).